A 273-amino-acid polypeptide reads, in one-letter code: Large ribosomal subunit protein uL2cz/uL2cy (273 aa).

Disordered regions lie at residues 1–23 and 224–273; these read MAIHLYKTSTPSTRNGAVDSQVK and NPVD…RRRK.

This sequence belongs to the universal ribosomal protein uL2 family. Part of the 50S ribosomal subunit.

The protein resides in the plastid. Its subcellular location is the chloroplast. This is Large ribosomal subunit protein uL2cz/uL2cy (rpl2-A) from Amborella trichopoda.